Here is a 243-residue protein sequence, read N- to C-terminus: Peptidyl-tRNA hydrolase (243 aa).

TRNA is bound at residue Y14. H19 acts as the Proton acceptor in catalysis. Residues Y64, N66, and N112 each contribute to the tRNA site. Residues K190–P207 show a composition bias toward basic and acidic residues. The disordered stretch occupies residues K190–E243. Residues H212 to P222 are compositionally biased toward polar residues.

The protein belongs to the PTH family. In terms of assembly, monomer.

The protein resides in the cytoplasm. The enzyme catalyses an N-acyl-L-alpha-aminoacyl-tRNA + H2O = an N-acyl-L-amino acid + a tRNA + H(+). Hydrolyzes ribosome-free peptidyl-tRNAs (with 1 or more amino acids incorporated), which drop off the ribosome during protein synthesis, or as a result of ribosome stalling. Functionally, catalyzes the release of premature peptidyl moieties from peptidyl-tRNA molecules trapped in stalled 50S ribosomal subunits, and thus maintains levels of free tRNAs and 50S ribosomes. The sequence is that of Peptidyl-tRNA hydrolase from Rhizobium etli (strain CIAT 652).